Consider the following 290-residue polypeptide: Ribosomal RNA small subunit methyltransferase A (290 aa).

The S-adenosyl-L-methionine site is built by N27, L29, G54, E75, D100, and N125.

This sequence belongs to the class I-like SAM-binding methyltransferase superfamily. rRNA adenine N(6)-methyltransferase family. RsmA subfamily.

It localises to the cytoplasm. It carries out the reaction adenosine(1518)/adenosine(1519) in 16S rRNA + 4 S-adenosyl-L-methionine = N(6)-dimethyladenosine(1518)/N(6)-dimethyladenosine(1519) in 16S rRNA + 4 S-adenosyl-L-homocysteine + 4 H(+). In terms of biological role, specifically dimethylates two adjacent adenosines (A1518 and A1519) in the loop of a conserved hairpin near the 3'-end of 16S rRNA in the 30S particle. May play a critical role in biogenesis of 30S subunits. The protein is Ribosomal RNA small subunit methyltransferase A of Streptococcus pneumoniae (strain JJA).